Here is a 107-residue protein sequence, read N- to C-terminus: Inner membrane protein YgbE (107 aa).

Over 1–20 (MRNSHNITLTNNDSLTEDEE) the chain is Cytoplasmic. Residues 21-43 (TTWSLPGAVVGFISWLFALAMPM) traverse the membrane as a helical segment. Residues 44 to 52 (LIYGSNTLF) lie on the Periplasmic side of the membrane. The chain crosses the membrane as a helical span at residues 53–75 (FFIYTWPFFLALMPVAVVVGIAL). Over 76-86 (HSLMDGKLRYS) the chain is Cytoplasmic. A helical transmembrane segment spans residues 87 to 106 (IVFTLVTVGIMFGALFMWLL). A topological domain (periplasmic) is located at residue glycine 107.

It is found in the cell inner membrane. In Escherichia coli (strain K12), this protein is Inner membrane protein YgbE (ygbE).